Reading from the N-terminus, the 393-residue chain is NAD(P)H-quinone oxidoreductase subunit H, chloroplastic (393 aa).

This sequence belongs to the complex I 49 kDa subunit family. In terms of assembly, NDH is composed of at least 16 different subunits, 5 of which are encoded in the nucleus.

It is found in the plastid. Its subcellular location is the chloroplast thylakoid membrane. It carries out the reaction a plastoquinone + NADH + (n+1) H(+)(in) = a plastoquinol + NAD(+) + n H(+)(out). The catalysed reaction is a plastoquinone + NADPH + (n+1) H(+)(in) = a plastoquinol + NADP(+) + n H(+)(out). NDH shuttles electrons from NAD(P)H:plastoquinone, via FMN and iron-sulfur (Fe-S) centers, to quinones in the photosynthetic chain and possibly in a chloroplast respiratory chain. The immediate electron acceptor for the enzyme in this species is believed to be plastoquinone. Couples the redox reaction to proton translocation, and thus conserves the redox energy in a proton gradient. The chain is NAD(P)H-quinone oxidoreductase subunit H, chloroplastic from Crucihimalaya wallichii (Rock-cress).